The sequence spans 286 residues: Ribonuclease H1 (286 aa).

Over residues 101–115 the composition is skewed to basic and acidic residues; the sequence is EPLDGDGHESAEPYA. The segment at 101 to 127 is disordered; sequence EPLDGDGHESAEPYAKHMKPSVEPAPP. Positions 136–282 constitute an RNase H type-1 domain; the sequence is MGDFVVVYTD…ADRLAREGAK (147 aa). Residues aspartate 145, glutamate 186, aspartate 210, and aspartate 274 each contribute to the Mg(2+) site.

It belongs to the RNase H family. Monomer. Mg(2+) serves as cofactor. In terms of tissue distribution, ubiquitous.

It localises to the cytoplasm. The catalysed reaction is Endonucleolytic cleavage to 5'-phosphomonoester.. In the presence of magnesium, manganese is inhibitory. In terms of biological role, endonuclease that specifically degrades the RNA of RNA-DNA hybrids. Plays a role in RNA polymerase II (RNAp II) transcription termination by degrading R-loop RNA-DNA hybrid formation at G-rich pause sites located downstream of the poly(A) site and behind the elongating RNAp II. The protein is Ribonuclease H1 (RNASEH1) of Homo sapiens (Human).